Consider the following 514-residue polypeptide: Protein Tube (514 aa).

Disordered stretches follow at residues 226–250, 255–274, 324–343, 366–385, and 413–514; these read VPQQ…RSSR, TASN…SNTA, LDAG…STST, ASDA…VPDM, and NGAK…ELQQ. Residues 259 to 274 are compositionally biased toward low complexity; sequence VAPTTASNAPSASNTA. Positions 422–433 are enriched in polar residues; the sequence is ADNNSSGTNSLS. The span at 434 to 460 shows a compositional bias: acidic residues; that stretch reads NDDDEQKEDDDDDDDDDVVDVDDEEAD. The span at 477 to 514 shows a compositional bias: polar residues; the sequence is TTVTCTSGENSFEFTNDSSSASNDDYTNNIPNLSELQQ.

In terms of tissue distribution, maternal and zygotic gene product.

Its subcellular location is the cytoplasm. Its function is as follows. Required for the determination of embryonic dorsoventral polarity. Is involved in transduction of information regulating nuclear import of dorsal protein. This chain is Protein Tube (tub), found in Drosophila virilis (Fruit fly).